The chain runs to 318 residues: Methionyl-tRNA formyltransferase (318 aa).

114–117 (SVLP) contributes to the (6S)-5,6,7,8-tetrahydrofolate binding site.

This sequence belongs to the Fmt family.

The enzyme catalyses L-methionyl-tRNA(fMet) + (6R)-10-formyltetrahydrofolate = N-formyl-L-methionyl-tRNA(fMet) + (6S)-5,6,7,8-tetrahydrofolate + H(+). Its function is as follows. Attaches a formyl group to the free amino group of methionyl-tRNA(fMet). The formyl group appears to play a dual role in the initiator identity of N-formylmethionyl-tRNA by promoting its recognition by IF2 and preventing the misappropriation of this tRNA by the elongation apparatus. The sequence is that of Methionyl-tRNA formyltransferase from Bdellovibrio bacteriovorus (strain ATCC 15356 / DSM 50701 / NCIMB 9529 / HD100).